The primary structure comprises 216 residues: Acyl-homoserine-lactone synthase (216 aa).

The protein belongs to the autoinducer synthase family.

The enzyme catalyses a fatty acyl-[ACP] + S-adenosyl-L-methionine = an N-acyl-L-homoserine lactone + S-methyl-5'-thioadenosine + holo-[ACP] + H(+). Its function is as follows. Required for the synthesis of an acyl-HSL autoinducer that binds to YukR and which is involved in the regulation of motility and morphology. The sequence is that of Acyl-homoserine-lactone synthase (yukI) from Yersinia ruckeri.